The chain runs to 538 residues: Bifunctional purine biosynthesis protein PurH (538 aa).

Residues 8-158 enclose the MGS-like domain; the sequence is IPAPDLVPVR…KNHAYVAIVT (151 aa).

This sequence belongs to the PurH family.

It carries out the reaction (6R)-10-formyltetrahydrofolate + 5-amino-1-(5-phospho-beta-D-ribosyl)imidazole-4-carboxamide = 5-formamido-1-(5-phospho-D-ribosyl)imidazole-4-carboxamide + (6S)-5,6,7,8-tetrahydrofolate. The enzyme catalyses IMP + H2O = 5-formamido-1-(5-phospho-D-ribosyl)imidazole-4-carboxamide. The protein operates within purine metabolism; IMP biosynthesis via de novo pathway; 5-formamido-1-(5-phospho-D-ribosyl)imidazole-4-carboxamide from 5-amino-1-(5-phospho-D-ribosyl)imidazole-4-carboxamide (10-formyl THF route): step 1/1. It functions in the pathway purine metabolism; IMP biosynthesis via de novo pathway; IMP from 5-formamido-1-(5-phospho-D-ribosyl)imidazole-4-carboxamide: step 1/1. The sequence is that of Bifunctional purine biosynthesis protein PurH from Mesorhizobium japonicum (strain LMG 29417 / CECT 9101 / MAFF 303099) (Mesorhizobium loti (strain MAFF 303099)).